A 399-amino-acid polypeptide reads, in one-letter code: Pre-mycofactocin synthase (399 aa).

Residues 4-386 (ARDIWFETVA…VPEDILVPEG (383 aa)) enclose the FMN hydroxy acid dehydrogenase domain. FMN is bound by residues Ser-111 and Gln-131. Position 133 (Tyr-133) interacts with a 2-oxocarboxylate. Position 159 (Thr-159) interacts with FMN. Arg-168 provides a ligand contact to a 2-oxocarboxylate. Position 257 (Lys-257) interacts with FMN. The Proton acceptor role is filled by His-281. FMN is bound by residues 312-316 (DGGIR) and 335-336 (GR).

This sequence belongs to the FMN-dependent alpha-hydroxy acid dehydrogenase family. FMN is required as a cofactor.

It carries out the reaction 3-amino-5-[(4-hydroxyphenyl)methyl]-4,4-dimethyl-2-pyrrolidin-2-one + O2 + H2O = pre-mycofactocin + H2O2 + NH4(+). Its function is as follows. Involved in the biosynthesis of the enzyme cofactor mycofactocin (MFT). Catalyzes the oxidative deamination of AHDP (3-amino-5-[(4-hydroxyphenyl)methyl]-4,4-dimethyl-2-pyrrolidin-2-one), forming an alpha-keto amide moiety on the resulting molecule, which is called pre-mycofactocin (PMFT). This reaction occurs via a 5-[(4-hydroxyphenyl)methyl]-3-imino-4,4-dimethylpyrrolidin-2-one intermediate, which converts to PMFT. The alpha-keto amide moiety is the redox-active center for the redox activity of mycofactocin. Is required for the in vivo ethanol assimilation in M.smegmatis. The protein is Pre-mycofactocin synthase of Mycolicibacterium smegmatis (strain ATCC 700084 / mc(2)155) (Mycobacterium smegmatis).